The primary structure comprises 382 residues: Na(+)/H(+) antiporter NhaA 2 (382 aa).

A run of 11 helical transmembrane segments spans residues 7-27 (MALSETFPGILLIFFTFLALL), 58-78 (LDLWINDGLIAIFFLCIGLEL), 94-114 (SLPIFGALGGMITPALIFAAI), 124-144 (GWAIPTATDIAFAVGILMLLG), 153-173 (LFLLSLAIFDDLGAIVIIALF), 178-198 (LSALAIIICLFCIFALLLLNY), 199-219 (YHITHLSLYVLVGVVLWIAML), 255-275 (NPWVVYFILPLFAFANAGIDI), 291-311 (IILGLFLGKQLGVFIFCFIAI), 327-347 (FYGICILTGIGFTMSLFIDGL), and 361-381 (LAILIASFLSAIVGFIYLKIV).

The protein belongs to the NhaA Na(+)/H(+) (TC 2.A.33) antiporter family.

The protein resides in the cell inner membrane. It carries out the reaction Na(+)(in) + 2 H(+)(out) = Na(+)(out) + 2 H(+)(in). Na(+)/H(+) antiporter that extrudes sodium in exchange for external protons. In Campylobacter jejuni subsp. doylei (strain ATCC BAA-1458 / RM4099 / 269.97), this protein is Na(+)/H(+) antiporter NhaA 2.